The sequence spans 90 residues: Small ribosomal subunit protein uS15 (90 aa).

Belongs to the universal ribosomal protein uS15 family. Part of the 30S ribosomal subunit. Forms a bridge to the 50S subunit in the 70S ribosome, contacting the 23S rRNA.

One of the primary rRNA binding proteins, it binds directly to 16S rRNA where it helps nucleate assembly of the platform of the 30S subunit by binding and bridging several RNA helices of the 16S rRNA. In terms of biological role, forms an intersubunit bridge (bridge B4) with the 23S rRNA of the 50S subunit in the ribosome. The chain is Small ribosomal subunit protein uS15 from Helicobacter pylori (strain P12).